A 375-amino-acid polypeptide reads, in one-letter code: Ferredoxin--NADP reductase, root-type isozyme, chloroplastic (375 aa).

Residues 1 to 60 constitute a chloroplast transit peptide; the sequence is MAHSALSQVSVAVPLQTDSSFRRSTFKATSITFSDRSSWISMPPIDLKAAPSRNQHIVCM. The FAD-binding FR-type domain maps to 91–219; the sequence is KEPYTATIVS…TGPSGKIMLL (129 aa). Residues 151–154, 172–174, Tyr-178, 193–195, and Thr-235 each bind FAD; these read RLYL, CVR, and VCS. Residue Arg-174 participates in NADP(+) binding. NADP(+)-binding positions include Thr-235, 266–267, 296–297, Lys-306, 334–335, and Glu-373; these read VA, SR, and GL.

The protein belongs to the ferredoxin--NADP reductase type 1 family. The cofactor is FAD.

It localises to the plastid. Its subcellular location is the chloroplast. The enzyme catalyses 2 reduced [2Fe-2S]-[ferredoxin] + NADP(+) + H(+) = 2 oxidized [2Fe-2S]-[ferredoxin] + NADPH. The protein operates within energy metabolism; photosynthesis. In terms of biological role, may play a key role in regulating the relative amounts of cyclic and non-cyclic electron flow to meet the demands of the plant for ATP and reducing power. Is involved in nitrate assimilation. The polypeptide is Ferredoxin--NADP reductase, root-type isozyme, chloroplastic (Nicotiana tabacum (Common tobacco)).